Consider the following 338-residue polypeptide: Glyceraldehyde-3-phosphate dehydrogenase (338 aa).

Residues 11–12 (TI) and Gly-111 contribute to the NAD(+) site. Residue 140–142 (SCN) participates in D-glyceraldehyde 3-phosphate binding. The active-site Nucleophile is the Cys-141. An NAD(+)-binding site is contributed by Arg-169. Residue 195 to 196 (HG) coordinates D-glyceraldehyde 3-phosphate. Gln-302 contributes to the NAD(+) binding site.

It belongs to the glyceraldehyde-3-phosphate dehydrogenase family. As to quaternary structure, homotetramer.

Its subcellular location is the cytoplasm. The enzyme catalyses D-glyceraldehyde 3-phosphate + phosphate + NADP(+) = (2R)-3-phospho-glyceroyl phosphate + NADPH + H(+). It carries out the reaction D-glyceraldehyde 3-phosphate + phosphate + NAD(+) = (2R)-3-phospho-glyceroyl phosphate + NADH + H(+). It participates in carbohydrate degradation; glycolysis; pyruvate from D-glyceraldehyde 3-phosphate: step 1/5. This Methanobacterium bryantii protein is Glyceraldehyde-3-phosphate dehydrogenase (gap).